The following is a 1351-amino-acid chain: uncharacterized protein (1351 aa).

Over residues 1-17 (MSKKDSKNSPKKSKDTN) the composition is skewed to basic and acidic residues. The disordered stretch occupies residues 1–31 (MSKKDSKNSPKKSKDTNSDESSSSNAETSSD). Low complexity predominate over residues 19–31 (DESSSSNAETSSD).

This is an uncharacterized protein from Acanthamoeba polyphaga mimivirus (APMV).